The sequence spans 186 residues: MSDNDTRPTDAEVEAELKGVPEDMIDRTSDNDELAKLREELETARQDVLYAKAETQNVRRRMEKDVADARAYAATGFARDILSVADNLSRALESIPADLREDDKFKNLVAGLEATGREIEKVFSSHGIVRIAAMGLPLDPHQHQAMIEMPSADAEPGTVIQELQAGYMIKDRLLRPAMVAVAKKPD.

It belongs to the GrpE family. In terms of assembly, homodimer.

It localises to the cytoplasm. Its function is as follows. Participates actively in the response to hyperosmotic and heat shock by preventing the aggregation of stress-denatured proteins, in association with DnaK and GrpE. It is the nucleotide exchange factor for DnaK and may function as a thermosensor. Unfolded proteins bind initially to DnaJ; upon interaction with the DnaJ-bound protein, DnaK hydrolyzes its bound ATP, resulting in the formation of a stable complex. GrpE releases ADP from DnaK; ATP binding to DnaK triggers the release of the substrate protein, thus completing the reaction cycle. Several rounds of ATP-dependent interactions between DnaJ, DnaK and GrpE are required for fully efficient folding. This chain is Protein GrpE, found in Novosphingobium aromaticivorans (strain ATCC 700278 / DSM 12444 / CCUG 56034 / CIP 105152 / NBRC 16084 / F199).